The following is a 327-amino-acid chain: Methionyl-tRNA formyltransferase (327 aa).

122-125 (SLLP) is a binding site for (6S)-5,6,7,8-tetrahydrofolate.

The protein belongs to the Fmt family.

The catalysed reaction is L-methionyl-tRNA(fMet) + (6R)-10-formyltetrahydrofolate = N-formyl-L-methionyl-tRNA(fMet) + (6S)-5,6,7,8-tetrahydrofolate + H(+). Attaches a formyl group to the free amino group of methionyl-tRNA(fMet). The formyl group appears to play a dual role in the initiator identity of N-formylmethionyl-tRNA by promoting its recognition by IF2 and preventing the misappropriation of this tRNA by the elongation apparatus. The protein is Methionyl-tRNA formyltransferase of Ralstonia nicotianae (strain ATCC BAA-1114 / GMI1000) (Ralstonia solanacearum).